The chain runs to 329 residues: Ketol-acid reductoisomerase (NADP(+)) (329 aa).

In terms of domain architecture, KARI N-terminal Rossmann spans 2 to 182 (TQLFYDTDAD…GGTRAGILET (181 aa)). Residues 25 to 28 (YGSQ), serine 51, serine 53, and 83 to 86 (DEFQ) each bind NADP(+). Histidine 108 is a catalytic residue. Position 134 (glycine 134) interacts with NADP(+). Positions 183–328 (NFKEETETDL…KGLRAMFSWL (146 aa)) constitute a KARI C-terminal knotted domain. Mg(2+)-binding residues include aspartate 191, glutamate 195, glutamate 227, and glutamate 231. Serine 252 provides a ligand contact to substrate.

Belongs to the ketol-acid reductoisomerase family. Requires Mg(2+) as cofactor.

It carries out the reaction (2R)-2,3-dihydroxy-3-methylbutanoate + NADP(+) = (2S)-2-acetolactate + NADPH + H(+). The catalysed reaction is (2R,3R)-2,3-dihydroxy-3-methylpentanoate + NADP(+) = (S)-2-ethyl-2-hydroxy-3-oxobutanoate + NADPH + H(+). The protein operates within amino-acid biosynthesis; L-isoleucine biosynthesis; L-isoleucine from 2-oxobutanoate: step 2/4. It functions in the pathway amino-acid biosynthesis; L-valine biosynthesis; L-valine from pyruvate: step 2/4. In terms of biological role, involved in the biosynthesis of branched-chain amino acids (BCAA). Catalyzes an alkyl-migration followed by a ketol-acid reduction of (S)-2-acetolactate (S2AL) to yield (R)-2,3-dihydroxy-isovalerate. In the isomerase reaction, S2AL is rearranged via a Mg-dependent methyl migration to produce 3-hydroxy-3-methyl-2-ketobutyrate (HMKB). In the reductase reaction, this 2-ketoacid undergoes a metal-dependent reduction by NADPH to yield (R)-2,3-dihydroxy-isovalerate. The polypeptide is Ketol-acid reductoisomerase (NADP(+)) (Prochlorococcus marinus subsp. pastoris (strain CCMP1986 / NIES-2087 / MED4)).